A 279-amino-acid chain; its full sequence is Tryptophan synthase alpha chain (279 aa).

Catalysis depends on proton acceptor residues Glu50 and Asp61.

It belongs to the TrpA family. Tetramer of two alpha and two beta chains.

The catalysed reaction is (1S,2R)-1-C-(indol-3-yl)glycerol 3-phosphate + L-serine = D-glyceraldehyde 3-phosphate + L-tryptophan + H2O. It functions in the pathway amino-acid biosynthesis; L-tryptophan biosynthesis; L-tryptophan from chorismate: step 5/5. Its function is as follows. The alpha subunit is responsible for the aldol cleavage of indoleglycerol phosphate to indole and glyceraldehyde 3-phosphate. This Brucella suis biovar 1 (strain 1330) protein is Tryptophan synthase alpha chain.